Here is a 356-residue protein sequence, read N- to C-terminus: tRNA N6-adenosine threonylcarbamoyltransferase (356 aa).

A divalent metal cation contacts are provided by histidine 124, histidine 128, and tyrosine 145. Residues 145-149, aspartate 177, glycine 192, glutamate 196, and asparagine 287 each bind substrate; that span reads YVSGG. Aspartate 315 is a binding site for a divalent metal cation.

The protein belongs to the KAE1 / TsaD family. Component of the EKC/KEOPS complex composed of at least BUD32, CGI121, GON7, KAE1 and PCC1; the whole complex dimerizes. The cofactor is a divalent metal cation.

It is found in the cytoplasm. The protein localises to the nucleus. The catalysed reaction is L-threonylcarbamoyladenylate + adenosine(37) in tRNA = N(6)-L-threonylcarbamoyladenosine(37) in tRNA + AMP + H(+). Functionally, component of the EKC/KEOPS complex that is required for the formation of a threonylcarbamoyl group on adenosine at position 37 (t(6)A37) in tRNAs that read codons beginning with adenine. The complex is probably involved in the transfer of the threonylcarbamoyl moiety of threonylcarbamoyl-AMP (TC-AMP) to the N6 group of A37. KAE1 likely plays a direct catalytic role in this reaction, but requires other protein(s) of the complex to fulfill this activity. The EKC/KEOPS complex also promotes both telomere uncapping and telomere elongation. The complex is required for efficient recruitment of transcriptional coactivators. The protein is tRNA N6-adenosine threonylcarbamoyltransferase of Yarrowia lipolytica (strain CLIB 122 / E 150) (Yeast).